We begin with the raw amino-acid sequence, 477 residues long: Erythritol/L-threitol-binding protein (477 aa).

A signal peptide (tat-type signal) is located at residues 1–38 (MMSRESQPGLHRQLSRRNMLAAMGLAGAAAVSLPVLSA).

Belongs to the bacterial solute-binding protein 1 family. Post-translationally, predicted to be exported by the Tat system. The position of the signal peptide cleavage has not been experimentally proven.

Part of an ABC transporter complex involved in erythritol/L-threitol import. Binds erythritol and L-threitol. Functions in the transport for the degradation pathways of erythritol and L-threitol, that allow M.smegmatis to grow on these compounds as the sole carbon source. In Mycolicibacterium smegmatis (strain ATCC 700084 / mc(2)155) (Mycobacterium smegmatis), this protein is Erythritol/L-threitol-binding protein.